The following is an 81-amino-acid chain: ATP synthase subunit c, chloroplastic (81 aa).

2 consecutive transmembrane segments (helical) span residues 3 to 23 and 57 to 77; these read PLIPAASVIAAGLAVGLASIG and LAFMEALTIYGLVVALALLFA.

It belongs to the ATPase C chain family. As to quaternary structure, F-type ATPases have 2 components, F(1) - the catalytic core - and F(0) - the membrane proton channel. F(1) has five subunits: alpha(3), beta(3), gamma(1), delta(1), epsilon(1). F(0) has four main subunits: a(1), b(1), b'(1) and c(10-14). The alpha and beta chains form an alternating ring which encloses part of the gamma chain. F(1) is attached to F(0) by a central stalk formed by the gamma and epsilon chains, while a peripheral stalk is formed by the delta, b and b' chains.

It is found in the plastid. The protein resides in the chloroplast thylakoid membrane. Functionally, f(1)F(0) ATP synthase produces ATP from ADP in the presence of a proton or sodium gradient. F-type ATPases consist of two structural domains, F(1) containing the extramembraneous catalytic core and F(0) containing the membrane proton channel, linked together by a central stalk and a peripheral stalk. During catalysis, ATP synthesis in the catalytic domain of F(1) is coupled via a rotary mechanism of the central stalk subunits to proton translocation. Its function is as follows. Key component of the F(0) channel; it plays a direct role in translocation across the membrane. A homomeric c-ring of between 10-14 subunits forms the central stalk rotor element with the F(1) delta and epsilon subunits. The sequence is that of ATP synthase subunit c, chloroplastic from Cycas taitungensis (Prince sago).